Reading from the N-terminus, the 266-residue chain is Translation initiation factor 2 subunit alpha (266 aa).

The S1 motif domain maps to G12–K83.

It belongs to the eIF-2-alpha family. As to quaternary structure, heterotrimer composed of an alpha, a beta and a gamma chain.

Functionally, eIF-2 functions in the early steps of protein synthesis by forming a ternary complex with GTP and initiator tRNA. The chain is Translation initiation factor 2 subunit alpha from Saccharolobus solfataricus (strain ATCC 35092 / DSM 1617 / JCM 11322 / P2) (Sulfolobus solfataricus).